We begin with the raw amino-acid sequence, 85 residues long: Toxin BmKaTX15 (85 aa).

The first 19 residues, 1–19 (MNYLVFFSLALLVMTGVES), serve as a signal peptide directing secretion. The region spanning 21 to 83 (RDGYIADDKN…VPIRVPGKCN (63 aa)) is the LCN-type CS-alpha/beta domain. 4 disulfides stabilise this stretch: Cys-31–Cys-82, Cys-35–Cys-55, Cys-41–Cys-65, and Cys-45–Cys-67.

Belongs to the long (4 C-C) scorpion toxin superfamily. Sodium channel inhibitor family. Alpha subfamily. In terms of tissue distribution, expressed by the venom gland.

The protein resides in the secreted. Its function is as follows. Alpha toxins bind voltage-independently at site-3 of sodium channels (Nav) and inhibit the inactivation of the activated channels, thereby blocking neuronal transmission. The protein is Toxin BmKaTX15 of Olivierus martensii (Manchurian scorpion).